The chain runs to 91 residues: Small ribosomal subunit protein uS15 (91 aa).

Belongs to the universal ribosomal protein uS15 family. In terms of assembly, part of the 30S ribosomal subunit. Forms a bridge to the 50S subunit in the 70S ribosome, contacting the 23S rRNA.

One of the primary rRNA binding proteins, it binds directly to 16S rRNA where it helps nucleate assembly of the platform of the 30S subunit by binding and bridging several RNA helices of the 16S rRNA. Its function is as follows. Forms an intersubunit bridge (bridge B4) with the 23S rRNA of the 50S subunit in the ribosome. The chain is Small ribosomal subunit protein uS15 from Cytophaga hutchinsonii (strain ATCC 33406 / DSM 1761 / CIP 103989 / NBRC 15051 / NCIMB 9469 / D465).